The following is a 557-amino-acid chain: Protein PECTIC ARABINOGALACTAN SYNTHESIS-RELATED (557 aa).

Positions 1–54 are disordered; the sequence is MAELRHSSSLGSRSSSSPLRAAGDEDSSSPHVHDHSPNGGDDEDGRPRHPSRDR. Residues 1-79 lie on the Cytoplasmic side of the membrane; the sequence is MAELRHSSSL…DPRVSPQKNK (79 aa). The span at 7-20 shows a compositional bias: low complexity; the sequence is SSSLGSRSSSSPLR. The span at 45–54 shows a compositional bias: basic and acidic residues; it reads GRPRHPSRDR. A helical; Signal-anchor for type II membrane protein membrane pass occupies residues 80–100; it reads ISLLLILILAIASLISVYGII. The Lumenal segment spans residues 101–557; the sequence is NHLNAPYLCK…NPLTPCMCKA (457 aa). N-linked (GlcNAc...) asparagine glycans are attached at residues asparagine 156, asparagine 188, and asparagine 324. Substrate is bound at residue 336-338; the sequence is HLR. N-linked (GlcNAc...) asparagine glycosylation is present at asparagine 375.

This sequence belongs to the glycosyltransferase GT106 family. Widely expressed with the highest expression in reproductive tissues and roots.

The protein resides in the golgi apparatus membrane. Its pathway is glycan metabolism; pectin biosynthesis. In terms of biological role, glycosyltransferase involved in the biosynthesis of pectic type-II arabinogalactans. The chain is Protein PECTIC ARABINOGALACTAN SYNTHESIS-RELATED from Arabidopsis thaliana (Mouse-ear cress).